The primary structure comprises 771 residues: MATLGTPRIGPRRELKTALESYWSGKSDESALLEAAAGLRAANWARQKSLGVTVIPSNDFTFYDHVLDTSVMVGAIPDIYGWKSGPVPLATYFAMARGAQGGNDDAACAHGHQGDGHAHGAPAQEMTKWFDTNYHYMVPEFTSGQRFQLSSLKAIDEYREAKALGYQTRPVLLGPVTYLKLGKSKDANLDPLSLLPDLLPVYIDVLKRLAAEGAEWVQIDEPCLVLDLDDATRKVLRAAYEQLADALPKLKVMLTTYFGGLGDNLDAALSLPVTGLHIDLARAPDQLEAVAAKAPHDLILSLGVIDGRNIWRANLPALLDRLEPVVSERGADRVQIAPSCSLLHVPIDVSLETDLDAELKSWLAFSVQKMGELATLGEALAKGRASVADALKASADAAAARKASPKVHDAKVEGRIAAVTSDMARRKSAFAERAKLQRERFGLPPFPTTTIGSFPQTAEVRKARSAHAKGTLSDTDYEKFLQEETARTIRWQEDIGLDVLVHGEFERNDMVQYFGEQLSGFAFTRHGWVQSYGSRCVRPPVLFGDVSRPRPMTVGWWKYAQSLTAKPMKGMLTGPVTILNWSFVRDDVPRSLACRQIALAIRDEVSDLEQAGATMIQIDEAALREGLPLRRSEWKTYLDWAVECFRLCASGVADATQIHTHMCYSEFNDIIDAIASMDADVISIETSRSKMELLDAFKTYKYPNEIGPGVYDIHSPRVPAVDEMTGLLKLARERLSDRQIWINPDCGLKTRKWEEVRPALVNMVEAAKLMR.

5-methyltetrahydropteroyltri-L-glutamate contacts are provided by residues 13–16 (RELK) and Lys128. Residues 451–453 (IGS) and Glu504 contribute to the L-homocysteine site. L-methionine is bound by residues 451-453 (IGS) and Glu504. Residues 535–536 (RC) and Trp581 contribute to the 5-methyltetrahydropteroyltri-L-glutamate site. L-homocysteine is bound at residue Asp619. Asp619 lines the L-methionine pocket. Glu625 lines the 5-methyltetrahydropteroyltri-L-glutamate pocket. Residues His661, Cys663, and Glu685 each coordinate Zn(2+). The Proton donor role is filled by His714. Cys746 serves as a coordination point for Zn(2+).

It belongs to the vitamin-B12 independent methionine synthase family. Zn(2+) serves as cofactor.

It catalyses the reaction 5-methyltetrahydropteroyltri-L-glutamate + L-homocysteine = tetrahydropteroyltri-L-glutamate + L-methionine. The protein operates within amino-acid biosynthesis; L-methionine biosynthesis via de novo pathway; L-methionine from L-homocysteine (MetE route): step 1/1. Its function is as follows. Catalyzes the transfer of a methyl group from 5-methyltetrahydrofolate to homocysteine resulting in methionine formation. This chain is 5-methyltetrahydropteroyltriglutamate--homocysteine methyltransferase, found in Nitrobacter winogradskyi (strain ATCC 25391 / DSM 10237 / CIP 104748 / NCIMB 11846 / Nb-255).